Consider the following 405-residue polypeptide: Aminodeoxyfutalosine deaminase (405 aa).

The a divalent metal cation site is built by H61 and H63. The substrate site is built by E141, S145, and H179. H206 serves as a coordination point for a divalent metal cation. E209 serves as the catalytic Proton donor. D306 lines the a divalent metal cation pocket.

It belongs to the metallo-dependent hydrolases superfamily. A divalent metal cation serves as cofactor.

It carries out the reaction 6-amino-6-deoxyfutalosine + H2O + H(+) = futalosine + NH4(+). The protein operates within quinol/quinone metabolism; menaquinone biosynthesis. Catalyzes the deamination of aminodeoxyfutalosine (AFL) into futalosine (FL), a step in the biosynthesis of menaquinone (MK, vitamin K2). To a lesser extent, can also deaminate 5'-methylthioadenosine. The sequence is that of Aminodeoxyfutalosine deaminase from Nitratiruptor sp. (strain SB155-2).